A 500-amino-acid chain; its full sequence is Lysine--tRNA ligase (500 aa).

Mg(2+) contacts are provided by Glu410 and Glu417.

It belongs to the class-II aminoacyl-tRNA synthetase family. Homodimer. Mg(2+) serves as cofactor.

The protein localises to the cytoplasm. The catalysed reaction is tRNA(Lys) + L-lysine + ATP = L-lysyl-tRNA(Lys) + AMP + diphosphate. The chain is Lysine--tRNA ligase from Shewanella sediminis (strain HAW-EB3).